We begin with the raw amino-acid sequence, 749 residues long: 5-methyltetrahydropteroyltriglutamate--homocysteine methyltransferase (749 aa).

Residues 15–18 and lysine 114 each bind 5-methyltetrahydropteroyltri-L-glutamate; that span reads RELK. Residues 425-427 and glutamate 478 each bind L-homocysteine; that span reads IGS. L-methionine-binding positions include 425–427 and glutamate 478; that span reads IGS. Tryptophan 555 serves as a coordination point for 5-methyltetrahydropteroyltri-L-glutamate. Aspartate 593 serves as a coordination point for L-homocysteine. Aspartate 593 contacts L-methionine. Glutamate 599 contacts 5-methyltetrahydropteroyltri-L-glutamate. Zn(2+) contacts are provided by histidine 636, cysteine 638, and glutamate 660. Catalysis depends on histidine 689, which acts as the Proton donor. Position 721 (cysteine 721) interacts with Zn(2+).

The protein belongs to the vitamin-B12 independent methionine synthase family. Requires Zn(2+) as cofactor.

The catalysed reaction is 5-methyltetrahydropteroyltri-L-glutamate + L-homocysteine = tetrahydropteroyltri-L-glutamate + L-methionine. Its pathway is amino-acid biosynthesis; L-methionine biosynthesis via de novo pathway; L-methionine from L-homocysteine (MetE route): step 1/1. Its function is as follows. Catalyzes the transfer of a methyl group from 5-methyltetrahydrofolate to homocysteine resulting in methionine formation. In Streptococcus thermophilus (strain ATCC BAA-491 / LMD-9), this protein is 5-methyltetrahydropteroyltriglutamate--homocysteine methyltransferase.